A 717-amino-acid polypeptide reads, in one-letter code: Segment polarity protein dishevelled homolog DVL-3 (717 aa).

The 82-residue stretch at Met-1–Asp-82 folds into the DIX domain. The interval Gly-89 to Ser-235 is disordered. Residues His-118 to Asn-127 show a composition bias toward polar residues. The span at Ala-140–Thr-155 shows a compositional bias: basic and acidic residues. Low complexity predominate over residues Glu-173–Phe-189. The span at Arg-199–Ser-210 shows a compositional bias: polar residues. The segment covering Leu-212–Lys-224 has biased composition (basic residues). In terms of domain architecture, PDZ spans Thr-248–Ala-333. The DEP domain maps to Ser-421–Asp-495. Residues Pro-552–Ile-653 form a disordered region. Over residues Gly-564–Ser-579 the composition is skewed to low complexity. Composition is skewed to basic and acidic residues over residues Ser-580–Asp-593 and Glu-602–Ser-618. A compositionally biased stretch (basic residues) spans His-629–His-645.

This sequence belongs to the DSH family. Expressed throughout the epidermis.

The protein resides in the cytoplasm. Functionally, involved in the signal transduction pathway mediated by multiple Wnt genes. Required during ciliogenesis for the docking of basal bodies to the apical plasma membrane. The chain is Segment polarity protein dishevelled homolog DVL-3 from Xenopus laevis (African clawed frog).